Consider the following 295-residue polypeptide: 4-hydroxy-tetrahydrodipicolinate synthase (295 aa).

Thr47 lines the pyruvate pocket. The active-site Proton donor/acceptor is the Tyr135. Residue Lys163 is the Schiff-base intermediate with substrate of the active site. A pyruvate-binding site is contributed by Ile206.

Belongs to the DapA family. In terms of assembly, homodimer.

The protein localises to the cytoplasm. It catalyses the reaction L-aspartate 4-semialdehyde + pyruvate = (2S,4S)-4-hydroxy-2,3,4,5-tetrahydrodipicolinate + H2O + H(+). The protein operates within amino-acid biosynthesis; L-lysine biosynthesis via DAP pathway; (S)-tetrahydrodipicolinate from L-aspartate: step 3/4. Catalyzes the condensation of (S)-aspartate-beta-semialdehyde [(S)-ASA] and pyruvate to 4-hydroxy-tetrahydrodipicolinate (HTPA). The protein is 4-hydroxy-tetrahydrodipicolinate synthase of Staphylococcus aureus (strain bovine RF122 / ET3-1).